A 101-amino-acid chain; its full sequence is ATP-dependent Clp protease adapter protein ClpS (101 aa).

This sequence belongs to the ClpS family. As to quaternary structure, binds to the N-terminal domain of the chaperone ClpA.

Its function is as follows. Involved in the modulation of the specificity of the ClpAP-mediated ATP-dependent protein degradation. The chain is ATP-dependent Clp protease adapter protein ClpS from Clostridium acetobutylicum (strain ATCC 824 / DSM 792 / JCM 1419 / IAM 19013 / LMG 5710 / NBRC 13948 / NRRL B-527 / VKM B-1787 / 2291 / W).